Consider the following 338-residue polypeptide: Secretion system apparatus protein SsaL (338 aa).

The protein is Secretion system apparatus protein SsaL (ssaL) of Salmonella typhimurium (strain LT2 / SGSC1412 / ATCC 700720).